A 566-amino-acid polypeptide reads, in one-letter code: 3'-5' exoribonuclease parn-1 (566 aa).

A divalent metal cation contacts are provided by aspartate 29, glutamate 31, aspartate 283, and aspartate 379.

The protein belongs to the CAF1 family. A divalent metal cation is required as a cofactor. Expressed in germline cells.

The protein localises to the cytoplasm. Functionally, involved in transcriptome surveillance. Required for piwi-interacting RNAs (piRNAs) 3'-end trimming, which is important for both fertility and piRNA-directed gene silencing. Has 3' to 5' exonuclease activity in vitro. In Caenorhabditis elegans, this protein is 3'-5' exoribonuclease parn-1.